A 273-amino-acid polypeptide reads, in one-letter code: Formamidopyrimidine-DNA glycosylase (273 aa).

Pro-2 serves as the catalytic Schiff-base intermediate with DNA. The active-site Proton donor is the Glu-3. Catalysis depends on Lys-57, which acts as the Proton donor; for beta-elimination activity. DNA is bound by residues His-91, Arg-110, and Lys-151. The FPG-type zinc finger occupies 236–270 (QVYGRKDEACNDCGTIIEAKVIGQRNSYFCPHCQM). The active-site Proton donor; for delta-elimination activity is the Arg-260.

It belongs to the FPG family. In terms of assembly, monomer. Requires Zn(2+) as cofactor.

The catalysed reaction is Hydrolysis of DNA containing ring-opened 7-methylguanine residues, releasing 2,6-diamino-4-hydroxy-5-(N-methyl)formamidopyrimidine.. It catalyses the reaction 2'-deoxyribonucleotide-(2'-deoxyribose 5'-phosphate)-2'-deoxyribonucleotide-DNA = a 3'-end 2'-deoxyribonucleotide-(2,3-dehydro-2,3-deoxyribose 5'-phosphate)-DNA + a 5'-end 5'-phospho-2'-deoxyribonucleoside-DNA + H(+). Functionally, involved in base excision repair of DNA damaged by oxidation or by mutagenic agents. Acts as a DNA glycosylase that recognizes and removes damaged bases. Has a preference for oxidized purines, such as 7,8-dihydro-8-oxoguanine (8-oxoG). Has AP (apurinic/apyrimidinic) lyase activity and introduces nicks in the DNA strand. Cleaves the DNA backbone by beta-delta elimination to generate a single-strand break at the site of the removed base with both 3'- and 5'-phosphates. This is Formamidopyrimidine-DNA glycosylase from Actinobacillus pleuropneumoniae serotype 5b (strain L20).